We begin with the raw amino-acid sequence, 600 residues long: NADPH-dependent diflavin oxidoreductase 1 (600 aa).

One can recognise a Flavodoxin-like domain in the interval 6–150 (LLILYGSQTG…VVDPWLKDLW (145 aa)). Residues 12-17 (SQTGTA), 59-62 (ATTG), 97-106 (LGDSSYPKFN), and Asp-132 each bind FMN. The 240-residue stretch at 210-449 (IHPFLAPVLS…WVKKGSMKFP (240 aa)) folds into the FAD-binding FR-type domain. FAD-binding positions include Arg-354, 386–389 (RAFS), and 420–423 (GLCS). NADP(+)-binding positions include Thr-463, 518–519 (SR), and 524–528 (KIYVQ). Position 599 (Trp-599) interacts with FAD.

The protein belongs to the NADPH-dependent diflavin oxidoreductase NDOR1 family. In the N-terminal section; belongs to the flavodoxin family. This sequence in the C-terminal section; belongs to the flavoprotein pyridine nucleotide cytochrome reductase family. In terms of assembly, interacts with ciapin1; as part of the cytosolic iron-sulfur (Fe-S) protein assembly (CIA) machinery. FAD is required as a cofactor. It depends on FMN as a cofactor.

The protein localises to the cytoplasm. It localises to the perinuclear region. It catalyses the reaction 2 oxidized [2Fe-2S]-[protein] + NADPH = 2 reduced [2Fe-2S]-[protein] + NADP(+) + H(+). NADPH-dependent reductase which is a central component of the cytosolic iron-sulfur (Fe-S) protein assembly (CIA) machinery. Transfers electrons from NADPH via its FAD and FMN prosthetic groups to the [2Fe-2S] cluster of ciapin1, another key component of the CIA machinery. In turn, this reduced cluster provides electrons for assembly of cytosolic iron-sulfur cluster proteins. It can also reduce the [2Fe-2S] cluster of cisd1 and activate this protein implicated in Fe/S cluster repair. The sequence is that of NADPH-dependent diflavin oxidoreductase 1 from Xenopus laevis (African clawed frog).